The sequence spans 191 residues: UPF0312 protein Sbal195_3198 (191 aa).

A signal peptide spans 1 to 22 (MKKQLFSALIGASLLAPMAASA).

Belongs to the UPF0312 family. Type 1 subfamily.

The protein localises to the periplasm. The chain is UPF0312 protein Sbal195_3198 from Shewanella baltica (strain OS195).